The chain runs to 928 residues: Isoleucine--tRNA ligase (928 aa).

The 'HIGH' region signature appears at 57–67 (PFANGNIHMGH). E552 is an L-isoleucyl-5'-AMP binding site. The 'KMSKS' region signature appears at 593–597 (KMSKS). ATP is bound at residue K596. Positions 887, 890, 907, and 910 each coordinate Zn(2+).

It belongs to the class-I aminoacyl-tRNA synthetase family. IleS type 1 subfamily. In terms of assembly, monomer. Zn(2+) serves as cofactor.

Its subcellular location is the cytoplasm. The enzyme catalyses tRNA(Ile) + L-isoleucine + ATP = L-isoleucyl-tRNA(Ile) + AMP + diphosphate. Catalyzes the attachment of isoleucine to tRNA(Ile). As IleRS can inadvertently accommodate and process structurally similar amino acids such as valine, to avoid such errors it has two additional distinct tRNA(Ile)-dependent editing activities. One activity is designated as 'pretransfer' editing and involves the hydrolysis of activated Val-AMP. The other activity is designated 'posttransfer' editing and involves deacylation of mischarged Val-tRNA(Ile). The protein is Isoleucine--tRNA ligase of Lacticaseibacillus paracasei (strain ATCC 334 / BCRC 17002 / CCUG 31169 / CIP 107868 / KCTC 3260 / NRRL B-441) (Lactobacillus paracasei).